Here is a 600-residue protein sequence, read N- to C-terminus: Elongation factor 4 (600 aa).

Positions 5 to 187 (SRIRNFSIIA…AIVTRLPPPK (183 aa)) constitute a tr-type G domain. Residues 17 to 22 (DHGKST) and 134 to 137 (NKID) contribute to the GTP site.

Belongs to the TRAFAC class translation factor GTPase superfamily. Classic translation factor GTPase family. LepA subfamily.

The protein localises to the cell inner membrane. The enzyme catalyses GTP + H2O = GDP + phosphate + H(+). Required for accurate and efficient protein synthesis under certain stress conditions. May act as a fidelity factor of the translation reaction, by catalyzing a one-codon backward translocation of tRNAs on improperly translocated ribosomes. Back-translocation proceeds from a post-translocation (POST) complex to a pre-translocation (PRE) complex, thus giving elongation factor G a second chance to translocate the tRNAs correctly. Binds to ribosomes in a GTP-dependent manner. This chain is Elongation factor 4, found in Rhodospirillum centenum (strain ATCC 51521 / SW).